A 230-amino-acid polypeptide reads, in one-letter code: UPF0173 metal-dependent hydrolase MM_2300 (230 aa).

It belongs to the UPF0173 family.

The protein is UPF0173 metal-dependent hydrolase MM_2300 of Methanosarcina mazei (strain ATCC BAA-159 / DSM 3647 / Goe1 / Go1 / JCM 11833 / OCM 88) (Methanosarcina frisia).